The following is a 102-amino-acid chain: MSETFKLPDHDELPQLVQTTLFDVGARVRKAVQTGYKFDQQLFPSYHKDQTDRNELPQQKHDPNLRLDDLKQELAADSIFWDTASTQEIADSFAKPDFLKSH.

The interval 43–62 is disordered; it reads FPSYHKDQTDRNELPQQKHD. Residues 46–62 are compositionally biased toward basic and acidic residues; sequence YHKDQTDRNELPQQKHD.

The protein belongs to the DIF1/spd1 family.

It localises to the cytoplasm. It is found in the nucleus. In terms of biological role, regulates the ribonucleotide reductase activity. This is S-phase delaying protein 2 (spd2) from Schizosaccharomyces pombe (strain 972 / ATCC 24843) (Fission yeast).